Here is a 98-residue protein sequence, read N- to C-terminus: Large ribosomal subunit protein uL23 (98 aa).

Belongs to the universal ribosomal protein uL23 family. In terms of assembly, part of the 50S ribosomal subunit. Contacts protein L29, and trigger factor when it is bound to the ribosome.

Its function is as follows. One of the early assembly proteins it binds 23S rRNA. One of the proteins that surrounds the polypeptide exit tunnel on the outside of the ribosome. Forms the main docking site for trigger factor binding to the ribosome. The chain is Large ribosomal subunit protein uL23 from Maricaulis maris (strain MCS10) (Caulobacter maris).